The primary structure comprises 100 residues: Ubiquitin-related modifier 1 (100 aa).

Gly-100 bears the 1-thioglycine mark. A Glycyl lysine isopeptide (Gly-Lys) (interchain with K-? in acceptor proteins) cross-link involves residue Gly-100.

It belongs to the URM1 family. Post-translationally, C-terminal thiocarboxylation occurs in 2 steps, it is first acyl-adenylated (-COAMP) via the hesA/moeB/thiF part of UBA4, then thiocarboxylated (-COSH) via the rhodanese domain of UBA4.

The protein localises to the cytoplasm. Its pathway is tRNA modification; 5-methoxycarbonylmethyl-2-thiouridine-tRNA biosynthesis. Acts as a sulfur carrier required for 2-thiolation of mcm(5)S(2)U at tRNA wobble positions of cytosolic tRNA(Lys), tRNA(Glu) and tRNA(Gln). Serves as sulfur donor in tRNA 2-thiolation reaction by being thiocarboxylated (-COSH) at its C-terminus by the MOCS3 homolog UBA4. The sulfur is then transferred to tRNA to form 2-thiolation of mcm(5)S(2)U. Prior mcm(5) tRNA modification by the elongator complex is required for 2-thiolation. Also acts as a ubiquitin-like protein (UBL) that is covalently conjugated via an isopeptide bond to lysine residues of target proteins such as AHP1. The thiocarboxylated form serves as substrate for conjugation and oxidative stress specifically induces the formation of UBL-protein conjugates. This is Ubiquitin-related modifier 1 from Eremothecium gossypii (strain ATCC 10895 / CBS 109.51 / FGSC 9923 / NRRL Y-1056) (Yeast).